The chain runs to 112 residues: UPF0145 protein CD630_17110 (112 aa).

The protein belongs to the UPF0145 family.

This chain is UPF0145 protein CD630_17110, found in Clostridioides difficile (strain 630) (Peptoclostridium difficile).